The chain runs to 206 residues: Recombination protein RecR (206 aa).

A C4-type zinc finger spans residues 60-75 (CARCNTFCEGGLCDIC). The 96-residue stretch at 83-178 (RRLMVVHMPA…KVSRLSQGIP (96 aa)) folds into the Toprim domain.

This sequence belongs to the RecR family.

Its function is as follows. May play a role in DNA repair. It seems to be involved in an RecBC-independent recombinational process of DNA repair. It may act with RecF and RecO. The sequence is that of Recombination protein RecR from Neisseria gonorrhoeae (strain NCCP11945).